The chain runs to 170 residues: Lipoprotein signal peptidase (170 aa).

3 helical membrane passes run Phe9–Val29, Ile72–Glu92, and Ile96–Arg118. Catalysis depends on residues Asp124 and Asp146. Residues Asn143–Ile163 traverse the membrane as a helical segment.

It belongs to the peptidase A8 family.

It localises to the cell inner membrane. It carries out the reaction Release of signal peptides from bacterial membrane prolipoproteins. Hydrolyzes -Xaa-Yaa-Zaa-|-(S,diacylglyceryl)Cys-, in which Xaa is hydrophobic (preferably Leu), and Yaa (Ala or Ser) and Zaa (Gly or Ala) have small, neutral side chains.. It participates in protein modification; lipoprotein biosynthesis (signal peptide cleavage). This protein specifically catalyzes the removal of signal peptides from prolipoproteins. This chain is Lipoprotein signal peptidase, found in Borreliella afzelii (strain PKo) (Borrelia afzelii).